The sequence spans 339 residues: N-acetylornithine carbamoyltransferase (339 aa).

Carbamoyl phosphate contacts are provided by residues 49–52, Trp77, and Arg112; that span reads SMRT. Glu144 is a N(2)-acetyl-L-ornithine binding site. 148–151 is a binding site for carbamoyl phosphate; the sequence is HPCQ. Lys252 and Leu295 together coordinate N(2)-acetyl-L-ornithine. 294 to 295 contributes to the carbamoyl phosphate binding site; the sequence is CL. N6-carboxylysine is present on Lys302. Arg322 lines the carbamoyl phosphate pocket.

Belongs to the aspartate/ornithine carbamoyltransferase superfamily. AOTCase family. In terms of assembly, homotrimer.

The protein resides in the cytoplasm. It carries out the reaction N(2)-acetyl-L-ornithine + carbamoyl phosphate = N(2)-acetyl-L-citrulline + phosphate + H(+). The protein operates within amino-acid biosynthesis; L-arginine biosynthesis. Carboxylation at Lys-302 increases the catalytic activity of the enzyme. Is potently inhibited by N(alpha)-acetyl-N(delta)-phosphonoacetyl-L-ornithine (PALAO). Its function is as follows. Catalyzes the transfer of the carbamoyl group from carbamoyl phosphate to the delta-amino group of N(2)-acetyl-L-ornithine to produce N(2)-acetyl-L-citrulline. This is a step in an alternative arginine biosynthesis pathway. The enzyme has no activity with ornithine. The sequence is that of N-acetylornithine carbamoyltransferase from Xanthomonas campestris pv. campestris (strain ATCC 33913 / DSM 3586 / NCPPB 528 / LMG 568 / P 25).